The following is a 509-amino-acid chain: Zinc metalloproteinase aureolysin (509 aa).

An N-terminal signal peptide occupies residues 1-27 (MRKFSRYAFTSMATVTLLSSLTPAALA). Positions 28-208 (SDTNHKPATS…VVEKTNLVKE (181 aa)) are excised as a propeptide. Asp348 contacts Ca(2+). Zn(2+) is bound at residue His352. Residue Glu353 is part of the active site. The Zn(2+) site is built by His356 and Glu376. Residues Asp387, Glu389, Asp390, Leu392, Glu395, Tyr398, Thr399, Lys402, and Asp405 each coordinate Ca(2+). His436 (proton donor) is an active-site residue.

The protein belongs to the peptidase M4 family. In terms of assembly, monomer. The cofactor is Ca(2+). It depends on Zn(2+) as a cofactor.

It catalyses the reaction Cleavage of insulin B chain with specificity similar to that of thermolysin, preferring hydrophobic P1' residues. Activates the glutamyl endopeptidase (EC 3.4.21.19) of Staphylococcus aureus.. Its function is as follows. Plays an essential role in immune evasion by helping bacteria to resist complement-mediated killing by neutrophils. Inhibits the deposition of host C3b on bacterial surfaces and the release of the chemoattractant C5a by cleaving the central complement protein C3. The cleavage site renders the C3b molecule vulnerable to proteolytic degradation by host regulators. Cleaves and inactivates host SERPINA1, which is an endogenous protease inhibitor essential for controlling neutrophil serine protease elastase. Also plays an essential role in the cleavage and subsequent activation of the serine protease SspA (glutamyl endopeptidase) which is involved in colonization and infection of human tissues. The protein is Zinc metalloproteinase aureolysin of Staphylococcus aureus.